A 61-amino-acid polypeptide reads, in one-letter code: Photosystem II reaction center protein K (61 aa).

A propeptide spanning residues 1–24 (MPNIFSLICICLNSALQPSGFFFA) is cleaved from the precursor. Residues 36–56 (IVDFMPVIPVLFFLLAFVWQA) traverse the membrane as a helical segment.

It belongs to the PsbK family. PSII is composed of 1 copy each of membrane proteins PsbA, PsbB, PsbC, PsbD, PsbE, PsbF, PsbH, PsbI, PsbJ, PsbK, PsbL, PsbM, PsbT, PsbX, PsbY, PsbZ, Psb30/Ycf12, at least 3 peripheral proteins of the oxygen-evolving complex and a large number of cofactors. It forms dimeric complexes.

Its subcellular location is the plastid. The protein resides in the chloroplast thylakoid membrane. Functionally, one of the components of the core complex of photosystem II (PSII). PSII is a light-driven water:plastoquinone oxidoreductase that uses light energy to abstract electrons from H(2)O, generating O(2) and a proton gradient subsequently used for ATP formation. It consists of a core antenna complex that captures photons, and an electron transfer chain that converts photonic excitation into a charge separation. The chain is Photosystem II reaction center protein K from Nymphaea alba (White water-lily).